A 963-amino-acid chain; its full sequence is Translation initiation factor IF-2 (963 aa).

Over residues 53 to 77 (SHGQADDSARKKITLTKRETSEIRQ) the composition is skewed to basic and acidic residues. The disordered stretch occupies residues 53–377 (SHGQADDSAR…RSNFQAPTEP (325 aa)). Residues 78–87 (SDATGKTRTV) show a composition bias toward polar residues. 4 stretches are compositionally biased toward basic and acidic residues: residues 98–110 (IKRDDAAPEHQAD), 123–183 (EEAR…KAEE), 197–250 (DTSR…EAEA), and 267–278 (PSERKAEEKKAE). The span at 343-356 (SSGGVGGWRGGPRG) shows a compositional bias: gly residues. The tr-type G domain maps to 463–632 (PRPPVVTVMG…SLQAEVLELK (170 aa)). A G1 region spans residues 472–479 (GHVDHGKT). 472–479 (GHVDHGKT) lines the GTP pocket. The G2 stretch occupies residues 497–501 (GITQH). The G3 stretch occupies residues 518–521 (DTPG). GTP-binding positions include 518 to 522 (DTPGH) and 572 to 575 (NKVD). Positions 572–575 (NKVD) are G4. The segment at 608–610 (SAK) is G5.

Belongs to the TRAFAC class translation factor GTPase superfamily. Classic translation factor GTPase family. IF-2 subfamily.

The protein localises to the cytoplasm. One of the essential components for the initiation of protein synthesis. Protects formylmethionyl-tRNA from spontaneous hydrolysis and promotes its binding to the 30S ribosomal subunits. Also involved in the hydrolysis of GTP during the formation of the 70S ribosomal complex. The protein is Translation initiation factor IF-2 of Cupriavidus taiwanensis (strain DSM 17343 / BCRC 17206 / CCUG 44338 / CIP 107171 / LMG 19424 / R1) (Ralstonia taiwanensis (strain LMG 19424)).